Consider the following 288-residue polypeptide: uncharacterized protein (288 aa).

An HTH rpiR-type domain is found at 5–81 (GNVLNKIGSL…LELSIELATK (77 aa)). Positions 41–60 (LSEIAKHLQVGEATLVRFCR) form a DNA-binding region, H-T-H motif. Residues 129-269 (VVKVLKKARR…YALLVQGEED (141 aa)) form the SIS domain.

This is an uncharacterized protein from Haemophilus influenzae (strain ATCC 51907 / DSM 11121 / KW20 / Rd).